The following is a 244-amino-acid chain: 1-(5-phosphoribosyl)-5-[(5-phosphoribosylamino)methylideneamino] imidazole-4-carboxamide isomerase (244 aa).

The Proton acceptor role is filled by Asp9. Catalysis depends on Asp131, which acts as the Proton donor.

It belongs to the HisA/HisF family.

The protein resides in the cytoplasm. It catalyses the reaction 1-(5-phospho-beta-D-ribosyl)-5-[(5-phospho-beta-D-ribosylamino)methylideneamino]imidazole-4-carboxamide = 5-[(5-phospho-1-deoxy-D-ribulos-1-ylimino)methylamino]-1-(5-phospho-beta-D-ribosyl)imidazole-4-carboxamide. Its pathway is amino-acid biosynthesis; L-histidine biosynthesis; L-histidine from 5-phospho-alpha-D-ribose 1-diphosphate: step 4/9. The polypeptide is 1-(5-phosphoribosyl)-5-[(5-phosphoribosylamino)methylideneamino] imidazole-4-carboxamide isomerase (Campylobacter jejuni subsp. doylei (strain ATCC BAA-1458 / RM4099 / 269.97)).